We begin with the raw amino-acid sequence, 156 residues long: Cyanate hydratase (156 aa).

Catalysis depends on residues Arg-96, Glu-99, and Ser-122.

It belongs to the cyanase family.

It catalyses the reaction cyanate + hydrogencarbonate + 3 H(+) = NH4(+) + 2 CO2. Its function is as follows. Catalyzes the reaction of cyanate with bicarbonate to produce ammonia and carbon dioxide. The sequence is that of Cyanate hydratase from Pseudomonas entomophila (strain L48).